A 226-amino-acid chain; its full sequence is Putative mitochondrial outer membrane protein porin 5 (226 aa).

Belongs to the eukaryotic mitochondrial porin (TC 1.B.8.1) family.

It localises to the mitochondrion outer membrane. In terms of biological role, putative channel that allows diffusion of small hydrophilic molecules through membranes. The protein is Putative mitochondrial outer membrane protein porin 5 (VDAC5) of Arabidopsis thaliana (Mouse-ear cress).